Here is a 336-residue protein sequence, read N- to C-terminus: CST complex subunit STN1 (336 aa).

Residues 49–126 (VDILGTVVCV…EVVASIFYKV (78 aa)) constitute a DNA-binding region (OB). Winged helix-turn-helix (wHTH) regions lie at residues 162–263 (QSQE…YVTD) and 264–336 (HDKE…YTAF).

The protein belongs to the CTC1 family. In terms of assembly, component of the CST complex.

It localises to the nucleus. The protein resides in the chromosome. It is found in the telomere. Component of the CST complex proposed to act as a specialized replication factor promoting DNA replication under conditions of replication stress or natural replication barriers such as the telomere duplex. The CST complex binds single-stranded DNA with high affinity in a sequence-independent manner, while isolated subunits bind DNA with low affinity by themselves. Initially the CST complex has been proposed to protect telomeres from DNA degradation. However, the CST complex has been shown to be involved in several aspects of telomere replication. This chain is CST complex subunit STN1, found in Aquarana catesbeiana (American bullfrog).